A 322-amino-acid polypeptide reads, in one-letter code: Atrochrysone carboxyl ACP thioesterase dmxR1 (322 aa).

The Zn(2+) site is built by His105, His107, Asp109, and His110. The Proton donor/acceptor role is filled by Asp109.

Belongs to the metallo-beta-lactamase superfamily. Zn(2+) is required as a cofactor.

It catalyses the reaction atrochrysone carboxyl-[ACP] + H2O = atrochrysone carboxylate + holo-[ACP] + H(+). The protein operates within secondary metabolite biosynthesis. Atrochrysone carboxyl ACP thioesterase; part of the gene cluster that mediates the biosynthesis of the dimeric xanthones cryptosporioptides. The pathway begins with the synthesis of atrochrysone thioester by the polyketide synthase dmx-nrPKS. The atrochrysone carboxyl ACP thioesterase dmxR1 then breaks the thioester bond and releases the atrochrysone carboxylic acid from dmx-nrPKS. Atrochrysone carboxylic acid is decarboxylated by the decarboxylase dmxR15, and oxidized by the anthrone oxygenase dmxR16 to yield emodin. Emodin is then reduced to emodin hydroquinone by the oxidoreductase dmxR7. A-ring reduction by the short chain dehydrogenase dmxR18, dehydration by the scytalone dehydratase-like protein dmxR17 and probable spontaneous re-oxidation, results in overall deoxygenation to chrysophanol. Baeyer-Villiger oxidation by the Baeyer-Villiger monooxygenase (BVMO) dmxR6 then yields monodictylactone in equilibrium with monodictyphenone. In the case of the cryptosporioptides biosynthesis, monodictylactone is reduced at C-12 to an alcohol (by the short chain dehydrogenases dmxR12 or dmxR8) and hydroxylated at C-5 by dmxR9, yielding the electron-rich aromatic which could eliminate H(2)O to form the ortho-quinonemethide, followed by tautomerisation to paraquinone and complete the formal reduction to produce the 10-methylgroup. Conjugate addition of C-4a-OH to the resulting paraquinone by the monooxygenase dmxR10 then gives cyclohexadienone, which is then reduced at C-5 by the short chain dehydrogenase dmxR3 to give the dihydroxanthone. The 6,7-epoxide in the cryptosporioptides could be introduced by the cytochrome P450 monooxygenase dmxL3. The highly reducing PKS dmxL2 manufactures butyrate, which is further carboxylated by dmxL1 to form ethylmalonate. It is not yet clear whether the carboxylation occurs while the butyrate is attached to the ACP of dmxL2, but this unusual fungal metabolite could then be esterified to O-5 by the O-acetyltransferase dmxR13. Finally, dimerization performed by dmxR5 gives the observed dimers cryptosporioptides A, B and C as the final products of the pathway. This is Atrochrysone carboxyl ACP thioesterase dmxR1 from Cryptosporiopsis sp. (strain 8999).